The sequence spans 126 residues: Aspartate 1-decarboxylase (126 aa).

Ser25 functions as the Schiff-base intermediate with substrate; via pyruvic acid in the catalytic mechanism. Pyruvic acid (Ser) is present on Ser25. Thr57 is a substrate binding site. Catalysis depends on Tyr58, which acts as the Proton donor. Substrate is bound at residue 73 to 75; the sequence is GAA.

This sequence belongs to the PanD family. In terms of assembly, heterooctamer of four alpha and four beta subunits. The cofactor is pyruvate. Is synthesized initially as an inactive proenzyme, which is activated by self-cleavage at a specific serine bond to produce a beta-subunit with a hydroxyl group at its C-terminus and an alpha-subunit with a pyruvoyl group at its N-terminus.

Its subcellular location is the cytoplasm. The enzyme catalyses L-aspartate + H(+) = beta-alanine + CO2. It participates in cofactor biosynthesis; (R)-pantothenate biosynthesis; beta-alanine from L-aspartate: step 1/1. Its function is as follows. Catalyzes the pyruvoyl-dependent decarboxylation of aspartate to produce beta-alanine. The chain is Aspartate 1-decarboxylase from Acetivibrio thermocellus (strain ATCC 27405 / DSM 1237 / JCM 9322 / NBRC 103400 / NCIMB 10682 / NRRL B-4536 / VPI 7372) (Clostridium thermocellum).